Reading from the N-terminus, the 977-residue chain is MAMLEARPYRPFKSSEEYLEAMREDLAEWLSTLYPELSINADNFMDRLDTGVALCKHANYVRQAAVDYLARRQARNKSMTRSMTSGLAGPILAMGNVHYLPAAKSGTFFARDNVSNFITWCRKSLKIIECLLFETDDLIMRKNEKHVILCLLEVARRGAKFGMLAPMLVQMERQIDREIAADIKANGAGCSENGTQTDALETGNSSAATMTTITTTTVETDLYDDSDDSETEDDGDQNPVLMYGPQPQIITNDLKSLDEMVRDLVEKCTCPSQFPMVRVSEGKYRIGDTKVLIFVRILRSHVMVRVGGGWDTLSHYLDKHDPCRCRAQHRSSVAARLIPRQSPNHNPSNGIELHKAQVIFERSPPAARRVFNSPNCNGGPGTGSSCGTGVVGVAVPPTLQNGHSLSPNSGKYRSRSPTPQRKFLNQQANGGGIASATGSSQTVTTDTSSGQLLGSPSLARRSMSPSPRRLIDMRKKQSSLDSYSSGPKSLPGYSCSMEEANGGSGVGSAAGGVSSGSAGSGVAGEQGGANKFENISDNGSEISDEGYRSLGVIQSGAQKRESLHSQASIEDAESNARLDQTSSDSQISPSDEPAEKATTDILEEEDLNGQDREEDQEDYSVCDGPQSLPAILSGAHKLSDKFEQSGVFITDDEITVDIAKTEDQSVANTMGNPTPNLSKIPRSPLAQRRRRSIDNSTCGGAGGSLQDLSSRSGLPAPAFSRKQPVYRSVRTRNSTGATTTPVAPPRSRQATQLPMVRDVTNTWSGRTTGAPKRRPPCTADTFVAPTNGTGPAGSFERNGKGRSSQILYDSNGRRVRSGAPGCTSSLTTSPVKNHASSPLAQQLLEAASSAKNDAQILEKMKSLLSRYAAGNQTKAGVGATATAANKINSNGKKTPVYEDFTTAWVHSNGNLERSESCSPPAKARSKRSSAASSCESNNSNAGAGSGAAAGSASVVSPRRERGMSKIPAPVRHHTELY.

The 140-residue stretch at 20 to 159 (EAMREDLAEW…CLLEVARRGA (140 aa)) folds into the Calponin-homology (CH) domain. Positions 218 to 245 (VETDLYDDSDDSETEDDGDQNPVLMYGP) are disordered. Over residues 221–236 (DLYDDSDDSETEDDGD) the composition is skewed to acidic residues. One can recognise a GAR domain in the interval 252–324 (NDLKSLDEMV…HYLDKHDPCR (73 aa)). Disordered regions lie at residues 397–543 (PTLQ…SEIS), 557–624 (AQKR…VCDG), 666–685 (VANTMGNPTPNLSKIPRSPL), 693–803 (IDNS…KGRS), and 910–977 (NLER…TELY). 2 stretches are compositionally biased toward polar residues: residues 399–428 (LQNGHSLSPNSGKYRSRSPTPQRKFLNQQA) and 436–454 (ATGSSQTVTTDTSSGQLLG). Residues 502-527 (GGSGVGSAAGGVSSGSAGSGVAGEQG) are compositionally biased toward gly residues. Positions 577–589 (RLDQTSSDSQISP) are enriched in polar residues. Positions 601–620 (ILEEEDLNGQDREEDQEDYS) are enriched in acidic residues. 2 stretches are compositionally biased toward polar residues: residues 666-677 (VANTMGNPTPNL) and 731-741 (TRNSTGATTTP). The segment covering 928–953 (SSAASSCESNNSNAGAGSGAAAGSAS) has biased composition (low complexity).

Belongs to the GAS2 family. As to expression, expressed in the ovary and the ring canals of the germline cells. In larvae, expressed in the notal region of the wing disk.

Its subcellular location is the cytoplasm. It is found in the cytoskeleton. The protein resides in the cell cortex. Essential for development and viability. Required for ovary development and oogenesis, and is essential for the development of the indirect flight muscles. May act as a negative regulator of the Notch signaling pathway in certain tissues, such as the muscle precursors and ovaries. May function as a linker protein between the actin and microtubule cytoskeletons. The protein is GAS2-like protein pickled eggs of Drosophila melanogaster (Fruit fly).